Reading from the N-terminus, the 597-residue chain is NADH-quinone oxidoreductase subunit C/D (597 aa).

The interval 1–187 (MIDENKKKNT…ESFFLDEQKE (187 aa)) is NADH dehydrogenase I subunit C. The NADH dehydrogenase I subunit D stretch occupies residues 211-597 (DFMFLNLGPN…IDFVMSDVDR (387 aa)).

In the N-terminal section; belongs to the complex I 30 kDa subunit family. The protein in the C-terminal section; belongs to the complex I 49 kDa subunit family. In terms of assembly, NDH-1 is composed of 13 different subunits. Subunits NuoB, CD, E, F, and G constitute the peripheral sector of the complex.

It localises to the cell inner membrane. It carries out the reaction a quinone + NADH + 5 H(+)(in) = a quinol + NAD(+) + 4 H(+)(out). NDH-1 shuttles electrons from NADH, via FMN and iron-sulfur (Fe-S) centers, to quinones in the respiratory chain. The immediate electron acceptor for the enzyme in this species is believed to be ubiquinone. Couples the redox reaction to proton translocation (for every two electrons transferred, four hydrogen ions are translocated across the cytoplasmic membrane), and thus conserves the redox energy in a proton gradient. The chain is NADH-quinone oxidoreductase subunit C/D from Buchnera aphidicola subsp. Schizaphis graminum (strain Sg).